Reading from the N-terminus, the 241-residue chain is 3-dehydroquinate dehydratase (241 aa).

3-dehydroquinate contacts are provided by residues Glu35–Arg37 and Arg70. His132 functions as the Proton donor/acceptor in the catalytic mechanism. Lys159 serves as the catalytic Schiff-base intermediate with substrate. 3-dehydroquinate is bound by residues Arg201 and Gln224.

It belongs to the type-I 3-dehydroquinase family. In terms of assembly, homodimer.

The enzyme catalyses 3-dehydroquinate = 3-dehydroshikimate + H2O. It functions in the pathway metabolic intermediate biosynthesis; chorismate biosynthesis; chorismate from D-erythrose 4-phosphate and phosphoenolpyruvate: step 3/7. Functionally, involved in the third step of the chorismate pathway, which leads to the biosynthesis of aromatic amino acids. Catalyzes the cis-dehydration of 3-dehydroquinate (DHQ) and introduces the first double bond of the aromatic ring to yield 3-dehydroshikimate. This Staphylococcus carnosus (strain TM300) protein is 3-dehydroquinate dehydratase.